Here is a 216-residue protein sequence, read N- to C-terminus: Probable transaldolase (216 aa).

Lys-83 serves as the catalytic Schiff-base intermediate with substrate.

It belongs to the transaldolase family. Type 3B subfamily.

It localises to the cytoplasm. It catalyses the reaction D-sedoheptulose 7-phosphate + D-glyceraldehyde 3-phosphate = D-erythrose 4-phosphate + beta-D-fructose 6-phosphate. Its pathway is carbohydrate degradation; pentose phosphate pathway; D-glyceraldehyde 3-phosphate and beta-D-fructose 6-phosphate from D-ribose 5-phosphate and D-xylulose 5-phosphate (non-oxidative stage): step 2/3. Transaldolase is important for the balance of metabolites in the pentose-phosphate pathway. This chain is Probable transaldolase, found in Shouchella clausii (strain KSM-K16) (Alkalihalobacillus clausii).